The following is a 77-amino-acid chain: Liver-expressed antimicrobial peptide 2 (77 aa).

A signal peptide spans 1–22; the sequence is MWHLKLCAVLMIFLLLLGQTDG. Positions 23–37 are excised as a propeptide; sequence SPIPEVSSAKRRPRR. 2 cysteine pairs are disulfide-bonded: Cys-54/Cys-65 and Cys-60/Cys-70.

The protein belongs to the LEAP2 family.

The protein localises to the secreted. Its function is as follows. Has an antimicrobial activity. The polypeptide is Liver-expressed antimicrobial peptide 2 (LEAP2) (Macaca mulatta (Rhesus macaque)).